A 477-amino-acid chain; its full sequence is Chromosomal replication initiator protein DnaA (477 aa).

Residues 1 to 87 are domain I, interacts with DnaA modulators; sequence MSDRSDPTHA…AGVSNFAIVV (87 aa). The interval 87-132 is domain II; it reads VNPEIAQDAFAQHPEPAAEQPYIETPTITAPTDNPGLPASPSRGDS. The tract at residues 112 to 131 is disordered; the sequence is PTITAPTDNPGLPASPSRGD. Residues 133-349 are domain III, AAA+ region; sequence RLNPKYGFDT…GTLIRVTAFA (217 aa). ATP contacts are provided by glycine 177, glycine 179, lysine 180, and threonine 181. A domain IV, binds dsDNA region spans residues 350 to 477; sequence SLNKTPVDLA…IKQNHRYGKM (128 aa).

Belongs to the DnaA family. In terms of assembly, oligomerizes as a right-handed, spiral filament on DNA at oriC.

It localises to the cytoplasm. Functionally, plays an essential role in the initiation and regulation of chromosomal replication. ATP-DnaA binds to the origin of replication (oriC) to initiate formation of the DNA replication initiation complex once per cell cycle. Binds the DnaA box (a 9 base pair repeat at the origin) and separates the double-stranded (ds)DNA. Forms a right-handed helical filament on oriC DNA; dsDNA binds to the exterior of the filament while single-stranded (ss)DNA is stabiized in the filament's interior. The ATP-DnaA-oriC complex binds and stabilizes one strand of the AT-rich DNA unwinding element (DUE), permitting loading of DNA polymerase. After initiation quickly degrades to an ADP-DnaA complex that is not apt for DNA replication. Binds acidic phospholipids. This Clavibacter michiganensis subsp. michiganensis (strain NCPPB 382) protein is Chromosomal replication initiator protein DnaA.